Consider the following 224-residue polypeptide: tRNA (guanine-N(7)-)-methyltransferase (224 aa).

S-adenosyl-L-methionine-binding residues include Glu54, Glu79, Glu106, and Asp129. Asp129 is an active-site residue. The substrate site is built by Lys133 and Asp165.

This sequence belongs to the class I-like SAM-binding methyltransferase superfamily. TrmB family.

The catalysed reaction is guanosine(46) in tRNA + S-adenosyl-L-methionine = N(7)-methylguanosine(46) in tRNA + S-adenosyl-L-homocysteine. Its pathway is tRNA modification; N(7)-methylguanine-tRNA biosynthesis. Catalyzes the formation of N(7)-methylguanine at position 46 (m7G46) in tRNA. This Chlamydia muridarum (strain MoPn / Nigg) protein is tRNA (guanine-N(7)-)-methyltransferase.